We begin with the raw amino-acid sequence, 340 residues long: Protein arginine N-methyltransferase 1 (340 aa).

Residues Lys16–Arg311 enclose the SAM-dependent MTase PRMT-type domain. The residue at position 19 (Tyr19) is a Phosphotyrosine. Residues His29, Arg38, Gly62, Asp84, and Glu113 each contribute to the S-adenosyl-L-methionine site. Residues Glu128 and Glu137 contribute to the active site. Phosphoserine is present on Ser176.

The protein belongs to the class I-like SAM-binding methyltransferase superfamily. Protein arginine N-methyltransferase family. Interacts with pab2.

The protein resides in the nucleus. It catalyses the reaction L-arginyl-[protein] + S-adenosyl-L-methionine = N(omega)-methyl-L-arginyl-[protein] + S-adenosyl-L-homocysteine + H(+). The enzyme catalyses L-arginyl-[protein] + 2 S-adenosyl-L-methionine = N(omega),N(omega)-dimethyl-L-arginyl-[protein] + 2 S-adenosyl-L-homocysteine + 2 H(+). Its function is as follows. S-adenosyl-L-methionine-dependent protein-arginine N-methyltransferase that catalyzes both the mono- and asymmetric (type I) dimethylation of the guanidino nitrogens of arginine residues in target proteins. Asymmetrically dimethylates the polyadenylate-binding protein pab2, modulating pab2 oligomerization. The chain is Protein arginine N-methyltransferase 1 from Schizosaccharomyces pombe (strain 972 / ATCC 24843) (Fission yeast).